A 318-amino-acid polypeptide reads, in one-letter code: Mediator of RNA polymerase II transcription subunit 3 (318 aa).

Residues 134–156 (SAAGITKTSSGNDGNTTGSTANT) are compositionally biased toward polar residues. The tract at residues 134–225 (SAAGITKTSS…PSLKQIPNTQ (92 aa)) is disordered. The segment covering 192–217 (HTGPATAPTTSNSAASAAAAAANTPS) has biased composition (low complexity).

The protein belongs to the Mediator complex subunit 3 family. Component of the Mediator complex.

Its subcellular location is the nucleus. Functionally, component of the Mediator complex, a coactivator involved in regulated gene transcription of nearly all RNA polymerase II-dependent genes. Mediator functions as a bridge to convey information from gene-specific regulatory proteins to the basal RNA polymerase II transcription machinery. Mediator is recruited to promoters by direct interactions with regulatory proteins and serves as a scaffold for the assembly of a functional preinitiation complex with RNA polymerase II and the general transcription factors. In Kluyveromyces lactis (strain ATCC 8585 / CBS 2359 / DSM 70799 / NBRC 1267 / NRRL Y-1140 / WM37) (Yeast), this protein is Mediator of RNA polymerase II transcription subunit 3 (PGD1).